A 177-amino-acid chain; its full sequence is tRNA-splicing endonuclease (177 aa).

Active-site residues include Y114, H123, and K154.

It belongs to the tRNA-intron endonuclease family. Archaeal short subfamily. In terms of assembly, homotetramer; although the tetramer contains four active sites, only two participate in the cleavage. Therefore, it should be considered as a dimer of dimers.

The catalysed reaction is pretRNA = a 3'-half-tRNA molecule with a 5'-OH end + a 5'-half-tRNA molecule with a 2',3'-cyclic phosphate end + an intron with a 2',3'-cyclic phosphate and a 5'-hydroxyl terminus.. Its function is as follows. Endonuclease that removes tRNA introns. Cleaves pre-tRNA at the 5'- and 3'-splice sites to release the intron. The products are an intron and two tRNA half-molecules bearing 2',3' cyclic phosphate and 5'-OH termini. Recognizes a pseudosymmetric substrate in which 2 bulged loops of 3 bases are separated by a stem of 4 bp. In Methanococcus maripaludis (strain DSM 14266 / JCM 13030 / NBRC 101832 / S2 / LL), this protein is tRNA-splicing endonuclease.